A 255-amino-acid chain; its full sequence is Acetylglutamate kinase (255 aa).

Residues 40–41, arginine 62, and asparagine 153 contribute to the substrate site; that span reads GG.

This sequence belongs to the acetylglutamate kinase family. ArgB subfamily.

The protein localises to the cytoplasm. It catalyses the reaction N-acetyl-L-glutamate + ATP = N-acetyl-L-glutamyl 5-phosphate + ADP. The protein operates within amino-acid biosynthesis; L-arginine biosynthesis; N(2)-acetyl-L-ornithine from L-glutamate: step 2/4. Its function is as follows. Catalyzes the ATP-dependent phosphorylation of N-acetyl-L-glutamate. The protein is Acetylglutamate kinase of Bacillus mycoides (strain KBAB4) (Bacillus weihenstephanensis).